A 204-amino-acid chain; its full sequence is Protein-L-isoaspartate O-methyltransferase (204 aa).

The protein belongs to the methyltransferase superfamily. L-isoaspartyl/D-aspartyl protein methyltransferase family. As to quaternary structure, monomer.

The protein resides in the cytoplasm. It carries out the reaction [protein]-L-isoaspartate + S-adenosyl-L-methionine = [protein]-L-isoaspartate alpha-methyl ester + S-adenosyl-L-homocysteine. Its function is as follows. Catalyzes the methyl esterification of L-isoaspartyl residues in peptides and proteins that result from spontaneous decomposition of normal L-aspartyl and L-asparaginyl residues. It plays a role in the repair and/or degradation of damaged proteins. The polypeptide is Protein-L-isoaspartate O-methyltransferase (pcm) (Rhizobium meliloti (strain 1021) (Ensifer meliloti)).